The sequence spans 238 residues: Beta-glucanase (238 aa).

Positions 1–26 (MMKKKSWFTLMITGVISLFFSVSAFA) are cleaved as a signal peptide. The GH16 domain occupies 29-238 (VFWEPLSYFN…EYDWVKYTSN (210 aa)). Cys56 and Cys85 are joined by a disulfide. The active-site Nucleophile is Glu129. The Proton donor role is filled by Glu133.

It belongs to the glycosyl hydrolase 16 family.

The enzyme catalyses Hydrolysis of (1-&gt;4)-beta-D-glucosidic linkages in beta-D-glucans containing (1-&gt;3)- and (1-&gt;4)-bonds.. The polypeptide is Beta-glucanase (gluB) (Paenibacillus polymyxa (Bacillus polymyxa)).